We begin with the raw amino-acid sequence, 279 residues long: MRDRLFSIIYKYNLHPNRDLGQNFLIVPDIIERNIERAEVGEKDTVLEIGPGLGVLTDPLSKRAGKVYAIEKDCRIVEILRREYNWPNVEIIEGDALKVEWPEFNKMVSNLPYQISSPVTFKLLSREFERAVLIFQLEFAERMVAKPGDKNYSRLSLMVRAKARAELVERIGKGAFWPRPKVDSAVVVLEPKPPEERIDLNENLVKALFQHRRSTVSAALKKSAHMLGLSKDKARELRQVFSRVPHSERRVFQLSPEDVLEIEEFLKKEGVIESYPASP.

S-adenosyl-L-methionine contacts are provided by N23, L25, G50, E71, D95, and N110.

It belongs to the class I-like SAM-binding methyltransferase superfamily. rRNA adenine N(6)-methyltransferase family. RsmA subfamily.

The protein localises to the cytoplasm. Specifically dimethylates two adjacent adenosines in the loop of a conserved hairpin near the 3'-end of 16S rRNA in the 30S particle. May play a critical role in biogenesis of 30S subunits. This chain is Probable ribosomal RNA small subunit methyltransferase A, found in Thermococcus kodakarensis (strain ATCC BAA-918 / JCM 12380 / KOD1) (Pyrococcus kodakaraensis (strain KOD1)).